Reading from the N-terminus, the 389-residue chain is Na(+)/H(+) antiporter NhaA (389 aa).

11 consecutive transmembrane segments (helical) span residues 17–37, 59–79, 95–115, 124–144, 154–174, 177–197, 213–233, 261–281, 287–307, 328–348, and 363–383; these read ILLL…LAGL, LLLW…GLEV, SLPT…YLLF, AGWA…MALL, VFLL…IALF, TDLS…LVAL, LVLW…GVII, FLIL…NMSL, PVPV…VMLF, IAPV…IASL, and LGTL…LSKV.

It belongs to the NhaA Na(+)/H(+) (TC 2.A.33) antiporter family.

It localises to the cell inner membrane. It catalyses the reaction Na(+)(in) + 2 H(+)(out) = Na(+)(out) + 2 H(+)(in). In terms of biological role, na(+)/H(+) antiporter that extrudes sodium in exchange for external protons. The sequence is that of Na(+)/H(+) antiporter NhaA from Shewanella sp. (strain MR-4).